A 338-amino-acid polypeptide reads, in one-letter code: Glutamyl-tRNA reductase (338 aa).

Substrate is bound by residues 50 to 53, Ser102, 107 to 109, and Gln113; these read TCHR and ETE. Cys51 functions as the Nucleophile in the catalytic mechanism. 181–186 serves as a coordination point for NADP(+); that stretch reads GYSEIN.

Belongs to the glutamyl-tRNA reductase family. Homodimer.

It carries out the reaction (S)-4-amino-5-oxopentanoate + tRNA(Glu) + NADP(+) = L-glutamyl-tRNA(Glu) + NADPH + H(+). Its pathway is porphyrin-containing compound metabolism; protoporphyrin-IX biosynthesis; 5-aminolevulinate from L-glutamyl-tRNA(Glu): step 1/2. Functionally, catalyzes the NADPH-dependent reduction of glutamyl-tRNA(Glu) to glutamate 1-semialdehyde (GSA). This is Glutamyl-tRNA reductase from Chlamydia abortus (strain DSM 27085 / S26/3) (Chlamydophila abortus).